The chain runs to 347 residues: NADH-ubiquinone oxidoreductase chain 2 (347 aa).

The next 11 membrane-spanning stretches (helical) occupy residues 3-23 (PMTS…VLMS), 25-45 (HWFM…PILM), 59-79 (YFLT…INLM), 96-116 (TLIT…FWVP), 122-142 (VSLS…LSLL), 149-169 (INTN…GWGG), 178-198 (IMAY…IYNP), 200-220 (LSLL…MLLI), 240-260 (ITTM…LTGF), 274-294 (NSVI…FFYM), and 326-346 (MTML…FISL).

This sequence belongs to the complex I subunit 2 family. Core subunit of respiratory chain NADH dehydrogenase (Complex I) which is composed of 45 different subunits. Interacts with TMEM242.

It is found in the mitochondrion inner membrane. The enzyme catalyses a ubiquinone + NADH + 5 H(+)(in) = a ubiquinol + NAD(+) + 4 H(+)(out). In terms of biological role, core subunit of the mitochondrial membrane respiratory chain NADH dehydrogenase (Complex I) which catalyzes electron transfer from NADH through the respiratory chain, using ubiquinone as an electron acceptor. Essential for the catalytic activity and assembly of complex I. The protein is NADH-ubiquinone oxidoreductase chain 2 of Sylvisorex granti (Grant's forest shrew).